Consider the following 421-residue polypeptide: Probable 26S proteasome regulatory subunit rpn6 (421 aa).

The 170-residue stretch at 221–390 (DFKTAYSYFY…GCLIVYDEPQ (170 aa)) folds into the PCI domain.

This sequence belongs to the proteasome subunit S9 family. As to quaternary structure, component of the lid subcomplex of the 19S proteasome regulatory particle complex (also named PA700 complex). The 26S proteasome consists of a 20S proteasome core and two 19S regulatory subunits.

Functionally, component of the lid subcomplex of the 26S proteasome, a multiprotein complex involved in the ATP-dependent degradation of ubiquitinated proteins. In the complex, rpn6 is required for proteasome assembly. The polypeptide is Probable 26S proteasome regulatory subunit rpn6 (rpn6) (Schizosaccharomyces pombe (strain 972 / ATCC 24843) (Fission yeast)).